The sequence spans 146 residues: 3-dehydroquinate dehydratase (146 aa).

Tyr-22 acts as the Proton acceptor in catalysis. Substrate contacts are provided by Asn-73, His-79, and Asp-86. His-99 (proton donor) is an active-site residue. Residues 100-101 (LS) and Arg-110 contribute to the substrate site.

Belongs to the type-II 3-dehydroquinase family. As to quaternary structure, homododecamer.

It carries out the reaction 3-dehydroquinate = 3-dehydroshikimate + H2O. The protein operates within metabolic intermediate biosynthesis; chorismate biosynthesis; chorismate from D-erythrose 4-phosphate and phosphoenolpyruvate: step 3/7. Its function is as follows. Catalyzes a trans-dehydration via an enolate intermediate. In Synechococcus sp. (strain CC9902), this protein is 3-dehydroquinate dehydratase.